Consider the following 151-residue polypeptide: 4-hydroxybenzoyl-CoA thioesterase (151 aa).

Residue Glu-73 is part of the active site. Position 100–102 (100–102 (FFR)) interacts with substrate.

The protein belongs to the thioesterase PaaI family. As to quaternary structure, homotetramer.

The catalysed reaction is 4-hydroxybenzoyl-CoA + H2O = 4-hydroxybenzoate + CoA + H(+). The protein operates within xenobiotic degradation; 4-chlorobenzoate degradation; 4-hydroxybenzoate from 4-chlorobenzoate: step 3/3. The polypeptide is 4-hydroxybenzoyl-CoA thioesterase (Arthrobacter globiformis).